The following is a 280-amino-acid chain: Protein FLOURY 1-like (280 aa).

Residues 22–42 form a helical membrane-spanning segment; sequence GFGFGIFVIGCSSQFFNLVFL. Positions 153–187 are disordered; it reads VALSETELDEKNHHGEEEESEDEEESQSQNDEDQL. Over residues 169-187 the composition is skewed to acidic residues; the sequence is EEESEDEEESQSQNDEDQL. In terms of domain architecture, GTD-binding spans 188 to 280; the sequence is LDVITLRTMV…LDDDEDKIQM (93 aa).

The protein resides in the membrane. The sequence is that of Protein FLOURY 1-like from Arabidopsis thaliana (Mouse-ear cress).